The chain runs to 275 residues: Large ribosomal subunit protein uL2c (275 aa).

The interval 222 to 258 (GSAMNPVDHPHGGGEGRAPIGRARPVSPWGRPALGAK) is disordered.

The protein belongs to the universal ribosomal protein uL2 family. In terms of assembly, part of the 50S ribosomal subunit.

The protein resides in the plastid. Its subcellular location is the chloroplast. This is Large ribosomal subunit protein uL2c (rpl2) from Chlorella vulgaris (Green alga).